We begin with the raw amino-acid sequence, 156 residues long: Small ribosomal subunit protein uS7 (156 aa).

The protein belongs to the universal ribosomal protein uS7 family. As to quaternary structure, part of the 30S ribosomal subunit. Contacts proteins S9 and S11.

Functionally, one of the primary rRNA binding proteins, it binds directly to 16S rRNA where it nucleates assembly of the head domain of the 30S subunit. Is located at the subunit interface close to the decoding center, probably blocks exit of the E-site tRNA. The polypeptide is Small ribosomal subunit protein uS7 (Paracoccus denitrificans (strain Pd 1222)).